A 203-amino-acid chain; its full sequence is Nucleoside triphosphate pyrophosphatase (203 aa).

The active-site Proton acceptor is Asp78.

This sequence belongs to the Maf family. Requires a divalent metal cation as cofactor.

The protein localises to the cytoplasm. The catalysed reaction is a ribonucleoside 5'-triphosphate + H2O = a ribonucleoside 5'-phosphate + diphosphate + H(+). The enzyme catalyses a 2'-deoxyribonucleoside 5'-triphosphate + H2O = a 2'-deoxyribonucleoside 5'-phosphate + diphosphate + H(+). Its function is as follows. Nucleoside triphosphate pyrophosphatase. May have a dual role in cell division arrest and in preventing the incorporation of modified nucleotides into cellular nucleic acids. The chain is Nucleoside triphosphate pyrophosphatase from Prochlorococcus marinus (strain AS9601).